The primary structure comprises 334 residues: Phosphate acyltransferase (334 aa).

It belongs to the PlsX family. Homodimer. Probably interacts with PlsY.

The protein localises to the cytoplasm. It carries out the reaction a fatty acyl-[ACP] + phosphate = an acyl phosphate + holo-[ACP]. Its pathway is lipid metabolism; phospholipid metabolism. Functionally, catalyzes the reversible formation of acyl-phosphate (acyl-PO(4)) from acyl-[acyl-carrier-protein] (acyl-ACP). This enzyme utilizes acyl-ACP as fatty acyl donor, but not acyl-CoA. The polypeptide is Phosphate acyltransferase (Streptococcus thermophilus (strain CNRZ 1066)).